We begin with the raw amino-acid sequence, 701 residues long: MESKIYKMELAGRELSFEIGKYALLANGAVLARYGDTAVLVTACASEKPREGINFFPLTVDYEERLYSVGKIPGGFIKREGKPSEKAILSARLIDRPIRPLFPKDFYHDVSVIATVLSVDPDNPPDVLAMLGSSVALSISDIPFEGPTGSVLVGYVDDKIVINPTAKEREVSKLHLVVSGTKDRVMMIEAGAKEVSEDIMLEAIMRAQEEIKKIVEFIEGIVREVGKPKMEYQKRIVPEDIKQKVREIAYDKVYQYVQIPDKIERDKKLDELKEEVFKAFEGETEETLLLVDDALYSLEKEIVRKMIAEEGKRPDGRKFDEIRPLYAEIGILPRTHGSALFKRGYTQVLTVATLGTKGEMQFLDGLEEEEAKRYMHHYNFPPFSTGESKPVRGPGRREIGHGALAERALEPVIPSEDEFPYTIRLVSEVLTSNGSTSQASVCGSTLALMDAGVPIKAPVAGISIGLITKDDGSFILLTDIQGIEDFFGDMDFKVAGTREGITAIQLDIKIHGLTKEIIEKALYQAREARLKILDFMQTVIDKPRSELSPYAPKIFKTTVDPEKIRDIIGPGGKMINKIIAETNVKIDIEPDGRIFVAAPDDISGNRAISMIEGIGREIEVGQFFLGKVTRTASYGAFVEIYPGKEGLVHISQLDERRLKSVDEVVKVGDLVLVKVIGIDKLGRLSLSRKEALNVTYSRKAK.

Mg(2+) contacts are provided by Asp485 and Asp491. Positions 552 to 611 (PKIFKTTVDPEKIRDIIGPGGKMINKIIAETNVKIDIEPDGRIFVAAPDDISGNRAISMI) constitute a KH domain. The S1 motif domain occupies 621–689 (GQFFLGKVTR…KLGRLSLSRK (69 aa)).

Belongs to the polyribonucleotide nucleotidyltransferase family. Requires Mg(2+) as cofactor.

It localises to the cytoplasm. It catalyses the reaction RNA(n+1) + phosphate = RNA(n) + a ribonucleoside 5'-diphosphate. In terms of biological role, involved in mRNA degradation. Catalyzes the phosphorolysis of single-stranded polyribonucleotides processively in the 3'- to 5'-direction. This chain is Polyribonucleotide nucleotidyltransferase, found in Caldicellulosiruptor bescii (strain ATCC BAA-1888 / DSM 6725 / KCTC 15123 / Z-1320) (Anaerocellum thermophilum).